A 146-amino-acid polypeptide reads, in one-letter code: Large ribosomal subunit protein uL15 (146 aa).

Basic and acidic residues predominate over residues 1–13; it reads MKLHELKPAEGSR. The disordered stretch occupies residues 1 to 65; the sequence is MKLHELKPAE…PLYRRLPKRG (65 aa). Composition is skewed to gly residues over residues 21-31 and 42-52; these read RGIGSGNGKTA and SGGGVRPGFEG.

This sequence belongs to the universal ribosomal protein uL15 family. Part of the 50S ribosomal subunit.

Functionally, binds to the 23S rRNA. This chain is Large ribosomal subunit protein uL15, found in Halalkalibacterium halodurans (strain ATCC BAA-125 / DSM 18197 / FERM 7344 / JCM 9153 / C-125) (Bacillus halodurans).